Consider the following 190-residue polypeptide: RING finger protein 227 (190 aa).

The segment at 18–81 (CNICFRPYNL…RRAVTCPFCR (64 aa)) adopts an RING-type zinc-finger fold. Positions 108–147 (ARAEREGDPMGSPAKDSGEDGEDDDGEAESEKGAGPPSAG) are disordered. Positions 126-135 (EDGEDDDGEA) are enriched in acidic residues.

This chain is RING finger protein 227, found in Mus musculus (Mouse).